The chain runs to 354 residues: Magnesium-protoporphyrin IX monomethyl ester [oxidative] cyclase (354 aa).

Belongs to the AcsF family. Fe cation is required as a cofactor.

The protein localises to the plastid. It is found in the chloroplast. The enzyme catalyses Mg-protoporphyrin IX 13-monomethyl ester + 3 NADPH + 3 O2 + 2 H(+) = 3,8-divinyl protochlorophyllide a + 3 NADP(+) + 5 H2O. It functions in the pathway porphyrin-containing compound metabolism; chlorophyll biosynthesis (light-independent). Catalyzes the formation of the isocyclic ring in chlorophyll biosynthesis. Mediates the cyclase reaction, which results in the formation of divinylprotochlorophyllide (Pchlide) characteristic of all chlorophylls from magnesium-protoporphyrin IX 13-monomethyl ester (MgPMME). The sequence is that of Magnesium-protoporphyrin IX monomethyl ester [oxidative] cyclase from Cyanidium caldarium (Red alga).